A 457-amino-acid chain; its full sequence is ADP-dependent glucose/glucosamine kinase (457 aa).

The region spanning 5–457 (TNWESLYEKA…SAFVSEFSLH (453 aa)) is the ADPK domain. Residues D37, E91, 115–116 (GQ), and H179 contribute to the D-glucose site. Position 269 (E269) interacts with Mg(2+). Residue N295 participates in ADP binding. Residue E298 participates in Mg(2+) binding. ADP is bound by residues 345 to 346 (HT), V432, and G442. D443 lines the D-glucose pocket. Position 443 (D443) interacts with Mg(2+). The active-site Proton acceptor is D443.

This sequence belongs to the ADP-dependent glucokinase family. The cofactor is Mg(2+).

The protein localises to the cytoplasm. The enzyme catalyses D-glucose + ADP = D-glucose 6-phosphate + AMP + H(+). The catalysed reaction is D-glucosamine + ADP = D-glucosamine 6-phosphate + AMP + H(+). It functions in the pathway carbohydrate degradation; glycolysis. Its activity is regulated as follows. Inhibited by 8-bromoadenosine phosphate (8-Br-AMP). Functionally, catalyzes the ADP-dependent phosphorylation of D-glucose to D-glucose 6-phosphate and glucosamine to glucosamine 6-phosphate. The sequence is that of ADP-dependent glucose/glucosamine kinase from Pyrococcus horikoshii (strain ATCC 700860 / DSM 12428 / JCM 9974 / NBRC 100139 / OT-3).